Consider the following 1039-residue polypeptide: 3',5'-cyclic-AMP phosphodiesterase 4 (1039 aa).

A signal peptide spans 1–29; that stretch reads MFNNNNNDKINNTMMSNNPSGQIINLESI. N-linked (GlcNAc...) asparagine glycosylation is found at asparagine 11, asparagine 34, and asparagine 37. Residues 30-201 are Extracellular-facing; that stretch reads DCNSNLSNTT…KKKVNAESLR (172 aa). 2 disordered regions span residues 40–63 and 116–181; these read SIKDSNNNNNNNNNNNNNINNNIN and IIPN…NNSI. The span at 45–63 shows a compositional bias: low complexity; the sequence is NNNNNNNNNNNNNINNNIN. Residues asparagine 119, asparagine 124, asparagine 131, asparagine 167, and asparagine 178 are each glycosylated (N-linked (GlcNAc...) asparagine). A helical membrane pass occupies residues 202–222; that stretch reads GPIIFQNFILYTFFLIVIGTA. At 223 to 226 the chain is on the cytoplasmic side; the sequence is EGTS. A helical transmembrane segment spans residues 227–247; the sequence is WAPEIRVANFVPYCVMCVVLL. At 248–256 the chain is on the extracellular side; it reads EFNRLHKKP. A helical transmembrane segment spans residues 257–277; it reads LLRIIFPLYTSNIPFAYMCIF. Over 278-283 the chain is Cytoplasmic; the sequence is SREARK. The helical transmembrane segment at 284 to 304 threads the bilayer; that stretch reads YVLISLLFFASCLCIFLQSGI. At 305-310 the chain is on the extracellular side; it reads PDLRKH. A helical membrane pass occupies residues 311–331; sequence IVIFCIIFMINYGCCILFMDW. Residues 332–356 are Cytoplasmic-facing; sequence FYIDTTGTKPYRGRILATKIHWGEE. A helical membrane pass occupies residues 357–377; the sequence is ATILVSMALLGCIFIVLEKFI. Topologically, residues 378–1039 are extracellular; the sequence is KSYARCVAEQ…LTQSNYLIVV (662 aa). Residues 384-414 adopt a coiled-coil conformation; it reads VAEQHYQIQCLQKEKEKLQTEINISLKKLDL. N-linked (GlcNAc...) asparagine glycans are attached at residues asparagine 406, asparagine 430, asparagine 500, and asparagine 515. Positions 533–973 constitute a PDEase domain; the sequence is PEITDQGIQE…QQLQQQQQQQ (441 aa). Histidine 609 functions as the Proton donor in the catalytic mechanism. The a divalent metal cation site is built by histidine 613, histidine 648, and aspartate 649. Positions 738–835 are disordered; sequence FPTTTNTQQP…NNSNSNNQNQ (98 aa). Low complexity predominate over residues 740–835; the sequence is TTTNTQQPSS…NNSNSNNQNQ (96 aa). 7 N-linked (GlcNAc...) asparagine glycosylation sites follow: asparagine 769, asparagine 791, asparagine 795, asparagine 804, asparagine 809, asparagine 823, and asparagine 826. Aspartate 861 is a binding site for a divalent metal cation. N-linked (GlcNAc...) asparagine glycans are attached at residues asparagine 874, asparagine 944, asparagine 1018, and asparagine 1023. The span at 978 to 1019 shows a compositional bias: low complexity; it reads QQQQQQLHHHQQQQQFQHQQHQQQLQHQHQQQLNNQNQNQNQ. Residues 978-1033 form a disordered region; it reads QQQQQQLHHHQQQQQFQHQQHQQQLQHQHQQQLNNQNQNQNQSNSNNSNSFGLTQS. A compositionally biased stretch (polar residues) spans 1020–1033; it reads SNSNNSNSFGLTQS.

Belongs to the cyclic nucleotide phosphodiesterase family. A divalent metal cation is required as a cofactor.

The protein localises to the cell membrane. It carries out the reaction 3',5'-cyclic AMP + H2O = AMP + H(+). Its activity is regulated as follows. Inhibited by 3-isobutyl-1-methylxanthine (IBMX). In terms of biological role, phosphodiesterase specific for extracellular cAMP. Involved in the degradation of extracellular cAMP specifically during multicellular development. The polypeptide is 3',5'-cyclic-AMP phosphodiesterase 4 (Pde4) (Dictyostelium discoideum (Social amoeba)).